A 157-amino-acid polypeptide reads, in one-letter code: Transcription antitermination protein NusB (157 aa).

The protein belongs to the NusB family.

Involved in transcription antitermination. Required for transcription of ribosomal RNA (rRNA) genes. Binds specifically to the boxA antiterminator sequence of the ribosomal RNA (rrn) operons. The protein is Transcription antitermination protein NusB of Xylella fastidiosa (strain Temecula1 / ATCC 700964).